Here is a 334-residue protein sequence, read N- to C-terminus: Ornithine carbamoyltransferase (334 aa).

Carbamoyl phosphate contacts are provided by residues 56–59 (STRT), Gln-83, Arg-107, and 134–137 (HPTQ). Residues Asn-168, Asp-232, and 236–237 (SM) contribute to the L-ornithine site. Carbamoyl phosphate-binding positions include 274 to 275 (CL) and Arg-320.

The protein belongs to the aspartate/ornithine carbamoyltransferase superfamily. OTCase family.

It localises to the cytoplasm. The enzyme catalyses carbamoyl phosphate + L-ornithine = L-citrulline + phosphate + H(+). It participates in amino-acid biosynthesis; L-arginine biosynthesis; L-arginine from L-ornithine and carbamoyl phosphate: step 1/3. Functionally, reversibly catalyzes the transfer of the carbamoyl group from carbamoyl phosphate (CP) to the N(epsilon) atom of ornithine (ORN) to produce L-citrulline. The polypeptide is Ornithine carbamoyltransferase (Shigella dysenteriae serotype 1 (strain Sd197)).